We begin with the raw amino-acid sequence, 496 residues long: Lysine--tRNA ligase (496 aa).

2 residues coordinate Mg(2+): E409 and E416.

It belongs to the class-II aminoacyl-tRNA synthetase family. In terms of assembly, homodimer. The cofactor is Mg(2+).

Its subcellular location is the cytoplasm. The enzyme catalyses tRNA(Lys) + L-lysine + ATP = L-lysyl-tRNA(Lys) + AMP + diphosphate. This chain is Lysine--tRNA ligase, found in Streptococcus pneumoniae (strain CGSP14).